The sequence spans 300 residues: tRNA dimethylallyltransferase (300 aa).

Residue 9–16 (GPTASGKS) coordinates ATP. Position 11-16 (11-16 (TASGKS)) interacts with substrate. An interaction with substrate tRNA region spans residues 34-37 (DSKQ).

It belongs to the IPP transferase family. In terms of assembly, monomer. Requires Mg(2+) as cofactor.

The enzyme catalyses adenosine(37) in tRNA + dimethylallyl diphosphate = N(6)-dimethylallyladenosine(37) in tRNA + diphosphate. Functionally, catalyzes the transfer of a dimethylallyl group onto the adenine at position 37 in tRNAs that read codons beginning with uridine, leading to the formation of N6-(dimethylallyl)adenosine (i(6)A). This Ehrlichia ruminantium (strain Welgevonden) protein is tRNA dimethylallyltransferase.